The sequence spans 187 residues: Prepronociceptin (187 aa).

The N-terminal stretch at 1 to 19 (MKILFCDVLLLSLLSSVFS) is a signal peptide. A propeptide spanning residues 20 to 95 (SCPRDCLTCQ…QPKASEMQHL (76 aa)) is cleaved from the precursor. 3 repeat units span residues 109–114 (DAEPGA), 115–120 (DAEPGA), and 121–126 (DAEPGA). The segment at 109-126 (DAEPGADAEPGADAEPGA) is 3 X 6 AA tandem repeats of D-A-E-P-G-A. A disordered region spans residues 109–133 (DAEPGADAEPGADAEPGADDAEEVE). Acidic residues predominate over residues 112-131 (PGADAEPGADAEPGADDAEE). A propeptide spanning residues 180–187 (TLHQNGNV) is cleaved from the precursor.

It belongs to the opioid neuropeptide precursor family. Post-translationally, specific enzymatic cleavages at paired basic residues probably yield other active peptides besides nociceptin. The N-terminal domain contains 6 conserved cysteines thought to be involved in disulfide bonding and/or processing. In terms of tissue distribution, brain and spinal cord. Low levels in kidney and spleen.

It localises to the secreted. Functionally, ligand of the opioid receptor-like receptor OPRL1. It may act as a transmitter in the brain by modulating nociceptive and locomotor behavior. May be involved in neuronal differentiation and development. When administered intracerebroventricularly, nociceptin induces hyperalgesia and decreases locomotor activity. Its function is as follows. Blocks nociceptin action in pain transmission by inhibiting nociceptin-induced hyperalgesia and allodynia. In terms of biological role, has potent analgesic activity. The polypeptide is Prepronociceptin (Pnoc) (Mus musculus (Mouse)).